The sequence spans 308 residues: Homoserine O-acetyltransferase (308 aa).

Cysteine 142 serves as the catalytic Acyl-thioester intermediate. Residues lysine 163 and serine 192 each contribute to the substrate site. The active-site Proton acceptor is the histidine 235. Residue glutamate 237 is part of the active site. Arginine 249 is a substrate binding site.

Belongs to the MetA family.

The protein resides in the cytoplasm. The enzyme catalyses L-homoserine + acetyl-CoA = O-acetyl-L-homoserine + CoA. Its pathway is amino-acid biosynthesis; L-methionine biosynthesis via de novo pathway; O-acetyl-L-homoserine from L-homoserine: step 1/1. In terms of biological role, transfers an acetyl group from acetyl-CoA to L-homoserine, forming acetyl-L-homoserine. In Rhizobium rhizogenes (strain K84 / ATCC BAA-868) (Agrobacterium radiobacter), this protein is Homoserine O-acetyltransferase.